The primary structure comprises 271 residues: Norsolorinic acid ketoreductase (271 aa).

The tract at residues 1 to 22 (MNGSLSQHDQERLSTPYRDGPP) is disordered. The NADP(+) site is built by Ile36, Asn112, Tyr185, Lys189, Val216, and Thr218. Tyr185 (proton donor) is an active-site residue. The Lowers pKa of active site Tyr role is filled by Lys189.

It belongs to the short-chain dehydrogenases/reductases (SDR) family.

It is found in the cytoplasm. Its subcellular location is the cytosol. The protein localises to the vacuole. The enzyme catalyses (1'S)-averantin + NADP(+) = norsolorinic acid + NADPH + H(+). The protein operates within mycotoxin biosynthesis; aflatoxin biosynthesis. In terms of biological role, norsolorinic acid ketoreductase; part of the gene cluster that mediates the biosynthesis of aflatoxins, a group of polyketide-derived furanocoumarins, and part of the most toxic and carcinogenic compounds among the known mycotoxins. The four major aflatoxins produced by A.parasiticus are aflatoxin B1 (AFB1), aflatoxin B2 (AFB2), aflatoxin G1 (AFG1) and aflatoxin G2 (AFG2). Within the aflatoxin pathway, the norsolorinic acid ketoreductase aflD performs the second step by catalyzing the dehydration of norsolorinic acid (NOR) to form (1'S)-averantin (AVN). The biosynthesis of aflatoxins begins with the norsolorinic acid synthase aflC that combines a hexanoyl starter unit produced by the fatty acid synthase aflA/aflB and 7 malonyl-CoA extender units to synthesize the precursor NOR. The second step is the conversion of NOR to averantin and requires the norsolorinic acid ketoreductase aflD, which catalyzes the dehydration of norsolorinic acid to form (1'S)-averantin. The norsolorinic acid reductases aflE and aflF may also play a role in the conversion of NOR to AVN. The cytochrome P450 monooxygenase aflG then catalyzes the hydroxylation of AVN to 5'hydroxyaverantin (HAVN). The next step is performed by the 5'-hydroxyaverantin dehydrogenase aflH that transforms HAVN to 5'-oxoaverantin (OAVN) which is further converted to averufin (AVF) by aflK that plays a dual role in the pathway, as a 5'-oxoaverantin cyclase that mediates conversion of 5'-oxoaverantin, as well as a versicolorin B synthase in a later step in the pathway. The averufin oxidase aflI catalyzes the conversion of AVF to versiconal hemiacetal acetate (VHA). VHA is then the substrate for the versiconal hemiacetal acetate esterase aflJ to yield versiconal (VAL). Versicolorin B synthase aflK then converts VAL to versicolorin B (VERB) by closing the bisfuran ring of aflatoxin which is required for DNA-binding, thus giving to aflatoxin its activity as a mutagen. Then, the activity of the versicolorin B desaturase aflL leads to versicolorin A (VERA). A branch point starts from VERB since it can also be converted to dihydrodemethylsterigmatocystin (DMDHST), probably also by aflL, VERA being a precursor for aflatoxins B1 and G1, and DMDHST for aflatoxins B2 and G2. Next, the versicolorin reductase aflM and the cytochrome P450 monooxygenase aflN are involved in conversion of VERA to demethylsterigmatocystin (DMST). AflX and aflY seem also involved in this step, through probable aflX-mediated epoxide ring-opening step following versicolorin A oxidation and aflY-mediated Baeyer-Villiger oxidation required for the formation of the xanthone ring. The methyltransferase aflO then leads to the modification of DMST to sterigmatocystin (ST), and of DMDHST to dihydrosterigmatocystin (DHST). Both ST and DHST are then substrates of the O-methyltransferase aflP to yield O-methylsterigmatocystin (OMST) and dihydro-O-methylsterigmatocystin (DHOMST), respectively. Finally OMST is converted to aflatoxins B1 and G1, and DHOMST to aflatoxins B2 and G2, via the action of several enzymes including O-methylsterigmatocystin oxidoreductase aflQ, the cytochrome P450 monooxygenase aflU, but also the NADH-dependent flavin oxidoreductase nadA which is specifically required for the synthesis of AFG1. The chain is Norsolorinic acid ketoreductase from Aspergillus parasiticus (strain ATCC 56775 / NRRL 5862 / SRRC 143 / SU-1).